A 109-amino-acid chain; its full sequence is Large ribosomal subunit protein P1 (109 aa).

The disordered stretch occupies residues 90 to 109; it reads AAAKKEEEEEDDDMGFGLFD.

The protein belongs to the eukaryotic ribosomal protein P1/P2 family. As to quaternary structure, P1 and P2 exist as dimers at the large ribosomal subunit.

Functionally, plays an important role in the elongation step of protein synthesis. The chain is Large ribosomal subunit protein P1 from Trypanosoma cruzi.